The primary structure comprises 874 residues: Alanine--tRNA ligase (874 aa).

Residues His563, His567, Cys665, and His669 each contribute to the Zn(2+) site.

It belongs to the class-II aminoacyl-tRNA synthetase family. Zn(2+) serves as cofactor.

It is found in the cytoplasm. The enzyme catalyses tRNA(Ala) + L-alanine + ATP = L-alanyl-tRNA(Ala) + AMP + diphosphate. In terms of biological role, catalyzes the attachment of alanine to tRNA(Ala) in a two-step reaction: alanine is first activated by ATP to form Ala-AMP and then transferred to the acceptor end of tRNA(Ala). Also edits incorrectly charged Ser-tRNA(Ala) and Gly-tRNA(Ala) via its editing domain. The protein is Alanine--tRNA ligase of Haemophilus influenzae (strain PittGG).